The following is a 300-amino-acid chain: Acetaldehyde dehydrogenase 3 (300 aa).

Residue 11–14 (SGNI) coordinates NAD(+). Cys126 functions as the Acyl-thioester intermediate in the catalytic mechanism. Residues 157–165 (SAGPGTRAN) and Asn276 each bind NAD(+).

It belongs to the acetaldehyde dehydrogenase family.

It catalyses the reaction acetaldehyde + NAD(+) + CoA = acetyl-CoA + NADH + H(+). This Rhodococcus opacus (strain B4) protein is Acetaldehyde dehydrogenase 3.